The primary structure comprises 625 residues: Threonine--tRNA ligase (625 aa).

The editing domain stretch occupies residues 1-143; that stretch reads MRILLIHSDY…ELSRTIIPEG (143 aa). Positions 206–505 are catalytic; it reads PHVKLMLEHE…MQEGKKPMLP (300 aa). Zn(2+) is bound by residues Cys-298, His-350, and His-474.

The protein belongs to the class-II aminoacyl-tRNA synthetase family. Homodimer. It depends on Zn(2+) as a cofactor.

It is found in the cytoplasm. The catalysed reaction is tRNA(Thr) + L-threonine + ATP = L-threonyl-tRNA(Thr) + AMP + diphosphate + H(+). Its function is as follows. Catalyzes the attachment of threonine to tRNA(Thr) in a two-step reaction: L-threonine is first activated by ATP to form Thr-AMP and then transferred to the acceptor end of tRNA(Thr). Also edits incorrectly charged L-seryl-tRNA(Thr). The protein is Threonine--tRNA ligase of Pyrococcus horikoshii (strain ATCC 700860 / DSM 12428 / JCM 9974 / NBRC 100139 / OT-3).